A 315-amino-acid chain; its full sequence is Lipoyl synthase (315 aa).

[4Fe-4S] cluster is bound by residues C62, C67, C73, C88, C92, C95, and S302. Positions 73 to 291 (CFGHGTATFM…GELAKKLGFS (219 aa)) constitute a Radical SAM core domain.

The protein belongs to the radical SAM superfamily. Lipoyl synthase family. Requires [4Fe-4S] cluster as cofactor.

It localises to the cytoplasm. The enzyme catalyses [[Fe-S] cluster scaffold protein carrying a second [4Fe-4S](2+) cluster] + N(6)-octanoyl-L-lysyl-[protein] + 2 oxidized [2Fe-2S]-[ferredoxin] + 2 S-adenosyl-L-methionine + 4 H(+) = [[Fe-S] cluster scaffold protein] + N(6)-[(R)-dihydrolipoyl]-L-lysyl-[protein] + 4 Fe(3+) + 2 hydrogen sulfide + 2 5'-deoxyadenosine + 2 L-methionine + 2 reduced [2Fe-2S]-[ferredoxin]. Its pathway is protein modification; protein lipoylation via endogenous pathway; protein N(6)-(lipoyl)lysine from octanoyl-[acyl-carrier-protein]: step 2/2. Catalyzes the radical-mediated insertion of two sulfur atoms into the C-6 and C-8 positions of the octanoyl moiety bound to the lipoyl domains of lipoate-dependent enzymes, thereby converting the octanoylated domains into lipoylated derivatives. This chain is Lipoyl synthase, found in Coxiella burnetii (strain CbuG_Q212) (Coxiella burnetii (strain Q212)).